Here is an 82-residue protein sequence, read N- to C-terminus: METVRRIVKGTLLLGFCTGIGGDLWVLVAPGQERRLEMRMNYPEANPPMLAEAHKRNEMVLKVIEESAKTNENMARRSPWSS.

The Mitochondrial matrix portion of the chain corresponds to 1-6 (METVRR). A helical transmembrane segment spans residues 7–29 (IVKGTLLLGFCTGIGGDLWVLVA). Residues 30–82 (PGQERRLEMRMNYPEANPPMLAEAHKRNEMVLKVIEESAKTNENMARRSPWSS) are Mitochondrial intermembrane-facing.

It belongs to the UQCC3 family. Associates with the ubiquinol-cytochrome c reductase complex (mitochondrial respiratory chain complex III or cytochrome b-c1 complex).

The protein localises to the mitochondrion inner membrane. Functionally, required for the assembly of the ubiquinol-cytochrome c reductase complex (mitochondrial respiratory chain complex III or cytochrome b-c1 complex), mediating cytochrome b recruitment and probably stabilization within the complex. Thereby, plays an important role in ATP production by mitochondria. Cardiolipin-binding protein, it may also control the cardiolipin composition of mitochondria membranes and their morphology. In Xenopus laevis (African clawed frog), this protein is Ubiquinol-cytochrome-c reductase complex assembly factor 3.